An 892-amino-acid chain; its full sequence is Polyribonucleotide nucleotidyltransferase (892 aa).

Residues 407 to 427 (YMHNYEMPPYSTGETGRVGSP) form a disordered region. Positions 521 and 527 each coordinate Mg(2+). In terms of domain architecture, KH spans 587–646 (PRIITTTVPVDKIGEVIGPKGKMINQIQEDTGAEIAIEDDGTVYISSEGGEAAEKAKEII). An S1 motif domain is found at 658-730 (GETYNGKVVK…DRGKISLAIP (73 aa)). Residues 727–892 (LAIPGFEDQE…VRRDFDPFED (166 aa)) form a disordered region. Basic and acidic residues-rich tracts occupy residues 739–844 (APRR…DRRS) and 851–877 (RRDD…ERSE).

The protein belongs to the polyribonucleotide nucleotidyltransferase family. The cofactor is Mg(2+).

It is found in the cytoplasm. It catalyses the reaction RNA(n+1) + phosphate = RNA(n) + a ribonucleoside 5'-diphosphate. In terms of biological role, involved in mRNA degradation. Catalyzes the phosphorolysis of single-stranded polyribonucleotides processively in the 3'- to 5'-direction. This is Polyribonucleotide nucleotidyltransferase from Bifidobacterium adolescentis (strain ATCC 15703 / DSM 20083 / NCTC 11814 / E194a).